An 802-amino-acid polypeptide reads, in one-letter code: MAESCEALGTVPEHERILQEIESTDTACVGPTLRSVYDDQPNAHKKFMEKLDACIRNHDKEIEKMCNFHHQGFVDAITELLKVRADAEKLKVTDTNRRFQDAGKEVIIQTEDIIRCRIQQRNITTVVEKLQLCLPVLEMYSKLKEQMSMKRYYSALKTMEQLENVYFPRVSQYRFCQLMMETLPKLREDMMNYCMSDLTYGLESIRKHSDKIGEAAMKQAQQQKSFSVALQKQNNMRFGKNMHVNNDRILEEKSDVIPKHALEEEAENDEEVLTVQDLVDFSPVYRCLHIYSALGDEETFENYYRKQRKKQARLVLQPQSSVHETVDGYRRYFTQIVGFFVVEDHILHVTQGLVTRVYTEELWNMALSKIIAVLRAHSSYCTDPDLVLELKNLIVIFADTLQGYGFPVNRLFDLLFEIRDQYNETLLKKWAGIFRDIFEEDNYSPIPIGSEEEYKVVISRFPFQDPDLEKQSFPKKFPMSQSVPLIYIQVKEFIYASLKFSESLHRSSTEIDDMLRKSTNLLLTRILSSCLLNLIRKPHIGLTELVQIIINTTHLEQACKYLEDFITNITNISQETVHTTRLYGLSTFKDARHAAEGEIYTKLNQKIDEFVQLADYDWTMAESDGRASGYLMDLINFLRSIFQVFTHLPGKVAQTACMSACQHLSTSLMQMLLDSELKQISMGAVQQFNLDVIQCELFASSEPVPGFQGDTLQLAFIDLRQLLDLFMVWDWSTYLADYGQPASKYLRVNPHAALTLLEKMKDTSKKNNIFAQFRKNDRDRQKLIETVVRQLRGLVTGMSQHT.

This sequence belongs to the SEC15 family. The exocyst complex is composed of EXOC1, EXOC2, EXOC3, EXOC4, EXOC5, EXOC6, EXOC7 and EXOC8. Interacts with CNTRL. Interacts with RAB11A in a GTP-dependent manner.

It is found in the cytoplasm. It localises to the perinuclear region. The protein localises to the cell projection. Its subcellular location is the growth cone. The protein resides in the midbody. It is found in the midbody ring. Its function is as follows. Component of the exocyst complex involved in the docking of exocytic vesicles with fusion sites on the plasma membrane. Together with RAB11A, RAB3IP, RAB8A, PARD3, PRKCI, ANXA2, CDC42 and DNMBP promotes transcytosis of PODXL to the apical membrane initiation sites (AMIS), apical surface formation and lumenogenesis. This Mus musculus (Mouse) protein is Exocyst complex component 6 (Exoc6).